We begin with the raw amino-acid sequence, 293 residues long: 33 kDa chaperonin (293 aa).

Disulfide bonds link cysteine 230/cysteine 232 and cysteine 263/cysteine 266.

The protein belongs to the HSP33 family. Under oxidizing conditions two disulfide bonds are formed involving the reactive cysteines. Under reducing conditions zinc is bound to the reactive cysteines and the protein is inactive.

It localises to the cytoplasm. Redox regulated molecular chaperone. Protects both thermally unfolding and oxidatively damaged proteins from irreversible aggregation. Plays an important role in the bacterial defense system toward oxidative stress. In Edwardsiella ictaluri (strain 93-146), this protein is 33 kDa chaperonin.